Consider the following 274-residue polypeptide: Orotidine 5'-phosphate decarboxylase (274 aa).

Residues Asp40, 62–64 (KTH), 93–102 (DRKFVDIGNT), Tyr227, and Arg245 contribute to the substrate site. The active-site Proton donor is Lys95.

It belongs to the OMP decarboxylase family.

The enzyme catalyses orotidine 5'-phosphate + H(+) = UMP + CO2. It functions in the pathway pyrimidine metabolism; UMP biosynthesis via de novo pathway; UMP from orotate: step 2/2. The sequence is that of Orotidine 5'-phosphate decarboxylase (URA3) from Coccidioides posadasii (strain RMSCC 757 / Silveira) (Valley fever fungus).